The sequence spans 193 residues: Acyl carrier protein phosphodiesterase (193 aa).

It belongs to the AcpH family.

The enzyme catalyses holo-[ACP] + H2O = apo-[ACP] + (R)-4'-phosphopantetheine + H(+). Converts holo-ACP to apo-ACP by hydrolytic cleavage of the phosphopantetheine prosthetic group from ACP. The polypeptide is Acyl carrier protein phosphodiesterase (Salmonella paratyphi A (strain ATCC 9150 / SARB42)).